The following is a 252-amino-acid chain: NDR1/HIN1-like protein 6 (252 aa).

Residues 1-46 form a disordered region; sequence MSQHQKIYPVQDPEAATARPTAPLVPRGSSRSEHGDPSKVPLNQRP. A helical transmembrane segment spans residues 70–90; that stretch reads FCFLLLLVVAVGASIGILYLV. N121, N154, N166, and N180 each carry an N-linked (GlcNAc...) asparagine glycan.

In terms of assembly, homodimer. In terms of tissue distribution, highly expressed in seeds and at lower level in roots and senescing leaves. Expressed in leaves and flowers.

The protein localises to the cell membrane. It is found in the cytoplasm. The protein resides in the cytosol. Functionally, plays an important role in the abiotic stresses-induced abscisic acid (ABA) signaling and biosynthesis. Acts as a positive regulator of ABA-mediated seed germination inhibition. Functions downstream of ABF2/AREB1, ABF4/AREB2 and ABF3. The polypeptide is NDR1/HIN1-like protein 6 (Arabidopsis thaliana (Mouse-ear cress)).